The primary structure comprises 508 residues: Glycerol kinase (508 aa).

Threonine 14 is an ADP binding site. The ATP site is built by threonine 14, threonine 15, and serine 16. Threonine 14 serves as a coordination point for sn-glycerol 3-phosphate. Arginine 18 contacts ADP. Residues arginine 84, glutamate 85, and tyrosine 136 each coordinate sn-glycerol 3-phosphate. Glycerol-binding residues include arginine 84, glutamate 85, and tyrosine 136. Histidine 232 is subject to Phosphohistidine; by HPr. Aspartate 246 provides a ligand contact to sn-glycerol 3-phosphate. Glycerol is bound by residues aspartate 246 and glutamine 247. ADP is bound by residues threonine 268 and glycine 311. The ATP site is built by threonine 268, glycine 311, glutamine 315, and glycine 412. Residues glycine 412 and asparagine 416 each coordinate ADP.

This sequence belongs to the FGGY kinase family. As to quaternary structure, homotetramer and homodimer (in equilibrium). Post-translationally, the phosphoenolpyruvate-dependent sugar phosphotransferase system (PTS), including enzyme I, and histidine-containing protein (HPr) are required for the phosphorylation, which leads to the activation of the enzyme.

The catalysed reaction is glycerol + ATP = sn-glycerol 3-phosphate + ADP + H(+). It functions in the pathway polyol metabolism; glycerol degradation via glycerol kinase pathway; sn-glycerol 3-phosphate from glycerol: step 1/1. With respect to regulation, activated by phosphorylation and inhibited by fructose 1,6-bisphosphate (FBP). In terms of biological role, key enzyme in the regulation of glycerol uptake and metabolism. Catalyzes the phosphorylation of glycerol to yield sn-glycerol 3-phosphate. The polypeptide is Glycerol kinase (Streptococcus pyogenes serotype M28 (strain MGAS6180)).